The sequence spans 383 residues: ATP phosphoribosyltransferase regulatory subunit (383 aa).

It belongs to the class-II aminoacyl-tRNA synthetase family. HisZ subfamily. As to quaternary structure, heteromultimer composed of HisG and HisZ subunits.

The protein localises to the cytoplasm. It participates in amino-acid biosynthesis; L-histidine biosynthesis; L-histidine from 5-phospho-alpha-D-ribose 1-diphosphate: step 1/9. Its function is as follows. Required for the first step of histidine biosynthesis. May allow the feedback regulation of ATP phosphoribosyltransferase activity by histidine. This is ATP phosphoribosyltransferase regulatory subunit from Desulfitobacterium hafniense (strain Y51).